The sequence spans 232 residues: Ribose-5-phosphate isomerase A (232 aa).

Substrate contacts are provided by residues 31–34 (TGST), 88–91 (DGAD), and 101–104 (KGGG). Catalysis depends on Glu110, which acts as the Proton acceptor. Lys128 provides a ligand contact to substrate.

It belongs to the ribose 5-phosphate isomerase family. Homodimer.

It catalyses the reaction aldehydo-D-ribose 5-phosphate = D-ribulose 5-phosphate. The protein operates within carbohydrate degradation; pentose phosphate pathway; D-ribose 5-phosphate from D-ribulose 5-phosphate (non-oxidative stage): step 1/1. In terms of biological role, catalyzes the reversible conversion of ribose-5-phosphate to ribulose 5-phosphate. The sequence is that of Ribose-5-phosphate isomerase A from Lactobacillus johnsonii (strain CNCM I-12250 / La1 / NCC 533).